The chain runs to 244 residues: Capsid protein (244 aa).

The Bipartite nuclear localization signal motif lies at 1–24 (MSTSKRKRGDDANWNKRTTKKKPS). The tract at residues 1–39 (MSTSKRKRGDDANWNKRTTKKKPSSAGLKKAGSKAERPS) is disordered.

This sequence belongs to the geminiviridae capsid protein family. As to quaternary structure, homomultimer. Interacts with the movement protein. Binds to single-stranded and double-stranded viral DNA.

The protein resides in the virion. The protein localises to the host nucleus. Functionally, encapsidates the viral genome into characteristic twinned ('geminate') particles. Binds the genomic viral ssDNA and shuttles it into and out of the cell nucleus. Plays a role in protection of the genome from degradation, virus acquisition and transmission by insect vectors, infectivity, and systemic movement. The CP of monopartite geminiviruses is absolutely essential for virus movement. This Maize streak virus genotype B (isolate Tas) (MSV) protein is Capsid protein.